The sequence spans 89 residues: Small ribosomal subunit protein uS15 (89 aa).

The protein belongs to the universal ribosomal protein uS15 family. Part of the 30S ribosomal subunit. Forms a bridge to the 50S subunit in the 70S ribosome, contacting the 23S rRNA.

One of the primary rRNA binding proteins, it binds directly to 16S rRNA where it helps nucleate assembly of the platform of the 30S subunit by binding and bridging several RNA helices of the 16S rRNA. Its function is as follows. Forms an intersubunit bridge (bridge B4) with the 23S rRNA of the 50S subunit in the ribosome. In Ectopseudomonas mendocina (strain ymp) (Pseudomonas mendocina), this protein is Small ribosomal subunit protein uS15.